Consider the following 683-residue polypeptide: uncharacterized protein (683 aa).

Coiled coils occupy residues 62 to 124 (PEHY…RKER), 155 to 259 (TTTN…KLSQ), and 346 to 376 (KKSL…DGDV). The segment at 213-237 (QDQVESQTGPKKRRKSPIENQPTAG) is disordered.

This is an uncharacterized protein from Invertebrate iridescent virus 3 (IIV-3).